The primary structure comprises 295 residues: tRNA dimethylallyltransferase (295 aa).

11–18 serves as a coordination point for ATP; that stretch reads GPTVSGKS. Substrate is bound at residue 13-18; sequence TVSGKS. Interaction with substrate tRNA regions lie at residues 36–39 and 158–162; these read DSMQ and QRIIR.

This sequence belongs to the IPP transferase family. As to quaternary structure, monomer. Mg(2+) serves as cofactor.

It catalyses the reaction adenosine(37) in tRNA + dimethylallyl diphosphate = N(6)-dimethylallyladenosine(37) in tRNA + diphosphate. In terms of biological role, catalyzes the transfer of a dimethylallyl group onto the adenine at position 37 in tRNAs that read codons beginning with uridine, leading to the formation of N6-(dimethylallyl)adenosine (i(6)A). This chain is tRNA dimethylallyltransferase, found in Bartonella quintana (strain Toulouse) (Rochalimaea quintana).